Consider the following 233-residue polypeptide: tRNA (guanine-N(1)-)-methyltransferase (233 aa).

S-adenosyl-L-methionine contacts are provided by residues Gly113 and 133–138 (IGDYVL).

This sequence belongs to the RNA methyltransferase TrmD family. As to quaternary structure, homodimer.

The protein resides in the cytoplasm. It carries out the reaction guanosine(37) in tRNA + S-adenosyl-L-methionine = N(1)-methylguanosine(37) in tRNA + S-adenosyl-L-homocysteine + H(+). Its function is as follows. Specifically methylates guanosine-37 in various tRNAs. This Ruminiclostridium cellulolyticum (strain ATCC 35319 / DSM 5812 / JCM 6584 / H10) (Clostridium cellulolyticum) protein is tRNA (guanine-N(1)-)-methyltransferase.